A 457-amino-acid polypeptide reads, in one-letter code: Peptidyl-prolyl cis-trans isomerase FKBP5 (457 aa).

Met1 is modified (N-acetylmethionine). The tract at residues 1–26 (MTTDEGAKNSRGNPAATVAEQGEDVT) is disordered. Residue Lys28 is modified to N6-acetyllysine. PPIase FKBP-type domains follow at residues 50 to 138 (GDRV…LDFK) and 165 to 251 (GARV…KSFE). TPR repeat units lie at residues 268 to 301 (AAIVKEKGTVYFKGGKYVQAVIQYGKIVSWLEME), 317 to 350 (LAAFLNLAMCYLKLREYTKAVECCDKALGLDSAN), and 351 to 384 (EKGLYRRGEAQLLMNEFESAKGDFEKVLEVNPQN). The interval 421-457 (AKEEANKAMSKKTSEGVTNEKLTASHAVEEEKPEGHV) is disordered. Ser445 is subject to Phosphoserine. Residues 447-457 (AVEEEKPEGHV) are compositionally biased toward basic and acidic residues.

In terms of assembly, part of a heteromultimeric cytoplasmic complex with HSP90AA1, HSPA1A/HSPA1B and steroid receptors. Upon ligand binding dissociates from the complex and FKBP4 takes its place. Interacts with functionally mature heterooligomeric progesterone receptor complexes along with HSP90 and TEBP. Interacts with NR3C1. Interacts with Akt/AKT1 and PHLPP1; enhancing dephosphorylation and subsequent activation of Akt/AKT1. Interacts with IFI44L; this interaction modulates the kinase activity of IKBKB and IKBKE. Interacts with IKBKB and IKBKE. Acetylation impairs ability to promote interaction between Akt/AKT1 and PHLPP1. Deacetylation by SIRT7 promotes interaction between Akt/AKT1 and PHLPP1, leading to suppress Akt/AKT1 activation. Post-translationally, ubiquitinated, leading to degradation in a proteasome-dependent manner. Deubiquitinated by USP49, leading to stabilization.

The protein localises to the cytoplasm. The protein resides in the nucleus. The enzyme catalyses [protein]-peptidylproline (omega=180) = [protein]-peptidylproline (omega=0). Inhibited by both FK506 and rapamycin. Its function is as follows. Immunophilin protein with PPIase and co-chaperone activities. Component of unligated steroid receptors heterocomplexes through interaction with heat-shock protein 90 (HSP90). Plays a role in the intracellular trafficking of heterooligomeric forms of steroid hormone receptors maintaining the complex into the cytoplasm when unliganded. Acts as a regulator of Akt/AKT1 activity by promoting the interaction between Akt/AKT1 and PHLPP1, thereby enhancing dephosphorylation and subsequent activation of Akt/AKT1. Interacts with IKBKE and IKBKB which facilitates IKK complex assembly leading to increased IKBKE and IKBKB kinase activity, NF-kappaB activation, and IFN production. This is Peptidyl-prolyl cis-trans isomerase FKBP5 (FKBP5) from Saimiri boliviensis boliviensis (Bolivian squirrel monkey).